The primary structure comprises 277 residues: Acyl-coenzyme A thioesterase MBLAC2 (277 aa).

Positions 80, 82, 84, 85, 167, 186, and 228 each coordinate Zn(2+).

Belongs to the metallo-beta-lactamase superfamily. Glyoxalase II family. The cofactor is Zn(2+).

It is found in the endoplasmic reticulum membrane. The protein localises to the cell membrane. It carries out the reaction hexadecanoyl-CoA + H2O = hexadecanoate + CoA + H(+). The enzyme catalyses dodecanoyl-CoA + H2O = dodecanoate + CoA + H(+). It catalyses the reaction tetradecanoyl-CoA + H2O = tetradecanoate + CoA + H(+). The catalysed reaction is octadecanoyl-CoA + H2O = octadecanoate + CoA + H(+). It carries out the reaction a beta-lactam + H2O = a substituted beta-amino acid. Functionally, acyl-CoA thioesterases are a group of enzymes that catalyze the hydrolysis of acyl-CoAs to the free fatty acid and coenzyme A (CoASH), providing the potential to regulate intracellular levels of acyl-CoAs, free fatty acids and CoASH. Has an acyl-CoA thioesterase activity towards the long chain fatty acyl-CoA thioester palmitoyl-CoA (hexadecanoyl-CoA; C16:0-CoA). Displays a substrate preference for fatty acyl-CoAs with chain-lengths C12-C18. This Gallus gallus (Chicken) protein is Acyl-coenzyme A thioesterase MBLAC2 (MBLAC2).